The primary structure comprises 20 residues: RGSNLTIHPLRNIIDLFYVG.

The N-linked (GlcNAc...) asparagine glycan is linked to Asn4.

It belongs to the peptidase A1 family. Chorionic epithelium (trophectoderm) and placental cotyledons.

The protein resides in the secreted. It localises to the extracellular space. The sequence is that of Pregnancy-associated glycoprotein 71D from Bison bonasus (European bison).